We begin with the raw amino-acid sequence, 446 residues long: MSDKRRYFGTDGVRGKVGQYPITPDFVLKLGWAAGRVLAKQGTKKVIIGKDTRISGYMLESALEAGLAAAGLKATFTGPMPTPAVAYLTQTFRAEAGIVISASHNPYYDNGIKFFSSEGTKLPDDIELAIEAELDKDIECVESAELGKATRLNDAAGRYIEFCKSTFPSDLSLANVKIVVDCAHGATYHIAPNVFKELGADVVAMGVEPNGTNINAEVGATDVRALQKRVVEEQAHLGLAFDGDGDRIIMVDHLGNKIDGDQIAYIIARDALRRGELKGGVVGTLMTNLGMENGLKQLGIPFVRAAVGDRYVMEQLLAKGWKIGAENSGHVILLDKVTTGDAIVAALQVLASVVGSEMTLHDLSQGMTLYPQVLENVRFVGNSNPLEAQAVLDSVAAVEAELGDKGRVLLRKSGTEPLIRVMVEGEDAELVQSSALKIAEAVKASC.

Serine 103 serves as the catalytic Phosphoserine intermediate. Positions 103, 242, 244, and 246 each coordinate Mg(2+). A Phosphoserine modification is found at serine 103.

This sequence belongs to the phosphohexose mutase family. Mg(2+) is required as a cofactor. Post-translationally, activated by phosphorylation.

The catalysed reaction is alpha-D-glucosamine 1-phosphate = D-glucosamine 6-phosphate. Functionally, catalyzes the conversion of glucosamine-6-phosphate to glucosamine-1-phosphate. The sequence is that of Phosphoglucosamine mutase from Vibrio campbellii (strain ATCC BAA-1116).